We begin with the raw amino-acid sequence, 69 residues long: UPF0150 protein AF_1072 (69 aa).

This sequence belongs to the UPF0150 family.

The chain is UPF0150 protein AF_1072 from Archaeoglobus fulgidus (strain ATCC 49558 / DSM 4304 / JCM 9628 / NBRC 100126 / VC-16).